The following is a 569-amino-acid chain: Proline--tRNA ligase (569 aa).

This sequence belongs to the class-II aminoacyl-tRNA synthetase family. ProS type 1 subfamily. Homodimer.

It localises to the cytoplasm. It carries out the reaction tRNA(Pro) + L-proline + ATP = L-prolyl-tRNA(Pro) + AMP + diphosphate. Its function is as follows. Catalyzes the attachment of proline to tRNA(Pro) in a two-step reaction: proline is first activated by ATP to form Pro-AMP and then transferred to the acceptor end of tRNA(Pro). As ProRS can inadvertently accommodate and process non-cognate amino acids such as alanine and cysteine, to avoid such errors it has two additional distinct editing activities against alanine. One activity is designated as 'pretransfer' editing and involves the tRNA(Pro)-independent hydrolysis of activated Ala-AMP. The other activity is designated 'posttransfer' editing and involves deacylation of mischarged Ala-tRNA(Pro). The misacylated Cys-tRNA(Pro) is not edited by ProRS. This is Proline--tRNA ligase from Endomicrobium trichonymphae.